The following is a 434-amino-acid chain: UDP-glucuronate 4-epimerase 2 (434 aa).

2 consecutive transmembrane segments (helical) span residues 32–52 (SVAK…IFFY) and 91–111 (GVSV…SAAL). Position 93-124 (93-124 (SVLVTGAAGFVGTHVSAALKRRGDGVLGLDNF)) interacts with NAD(+). The active-site Proton acceptor is Tyr243.

Belongs to the NAD(P)-dependent epimerase/dehydratase family. Homodimer. As to expression, in roots, leaves, siliques, flowers, pollen and stems.

The protein localises to the golgi apparatus. It is found in the golgi stack membrane. The catalysed reaction is UDP-alpha-D-glucuronate = UDP-alpha-D-galacturonate. Functionally, involved in the synthesis of the negatively charged monosaccharide that forms the backbone of pectic cell wall components. The chain is UDP-glucuronate 4-epimerase 2 (GAE2) from Arabidopsis thaliana (Mouse-ear cress).